Here is a 2066-residue protein sequence, read N- to C-terminus: Kinesin-like protein KIN-12C (2066 aa).

2 disordered regions span residues 1–41 (MSRN…SQIQ) and 59–116 (RAQH…RVSL). Low complexity predominate over residues 20–33 (SLSLFSPSRPPLNS). Positions 67-76 (GPEKKFEVLE) are enriched in basic and acidic residues. Polar residues predominate over residues 99 to 109 (EPNSAQSTPTR). In terms of domain architecture, Kinesin motor spans 168–505 (NVQVLIRLRP…LKFAQRAKLI (338 aa)). 249-256 (GQTGSGKT) contacts ATP. Microtubules-binding regions lie at residues 375–379 (SSRSH), 406–412 (VDLAGSE), and 454–458 (HVPYR). 2 coiled-coil regions span residues 1521–1618 (DLKT…VDEI) and 1650–1772 (KIYA…EILL). 2 disordered regions span residues 1803–1823 (SAAE…RGSS) and 2043–2066 (KYRK…TRYR). Positions 1905–2051 (VQRVVEKAQQ…AKYRKTSNNH (147 aa)) form a coiled coil. The span at 2047–2066 (TSNNHPSTRTQGQSSGTRYR) shows a compositional bias: polar residues.

Belongs to the TRAFAC class myosin-kinesin ATPase superfamily. Kinesin family. KIN-12 subfamily. Interacts with TAN. Interacts with RANGAP1. As to expression, expressed in tissues enriched in dividing cells, such as root meristems, root primordia, and leaf primordia/young leaves.

Its subcellular location is the cytoplasm. It localises to the cytoskeleton. It is found in the phragmoplast. Functionally, involved in the spatial control of cytokinesis by a proper phragmoplast guidance. Localizes TAN to the cortical division sites (CDS) during cytokinesis via direct binding. The chain is Kinesin-like protein KIN-12C from Arabidopsis thaliana (Mouse-ear cress).